We begin with the raw amino-acid sequence, 310 residues long: Mitochondrial 2-oxodicarboxylate carrier 1 (310 aa).

The next 6 helical transmembrane spans lie at 9–29 (LPFI…LLVM), 78–97 (SHLY…KRAI), 126–146 (IYSG…FELV), 179–199 (GLEA…GIIF), 219–239 (LIAG…FDVV), and 281–301 (MRLA…MDFF). Solcar repeat units follow at residues 9 to 108 (LPFI…FQTF), 120 to 204 (MTQK…IRKL), and 213 to 300 (EKTR…VMDF).

The protein belongs to the mitochondrial carrier (TC 2.A.29) family.

It localises to the mitochondrion inner membrane. Its function is as follows. Transports C5-C7 oxodicarboxylates across the inner membranes of mitochondria. Can transport 2-oxoadipate, 2-oxoglutarate, adipate, glutarate, 2-oxopimelate, oxaloacetate, citrate and malate. The main physiological role is probably to supply 2-oxoadipate and 2-oxoglutarate from the mitochondrial matrix to the cytosol where they are used in the biosynthesis of lysine and glutamate, respectively, and in lysine catabolism. In Saccharomyces cerevisiae (strain ATCC 204508 / S288c) (Baker's yeast), this protein is Mitochondrial 2-oxodicarboxylate carrier 1 (ODC1).